A 292-amino-acid chain; its full sequence is Putative xanthine dehydrogenase FAD-binding subunit XdhB (292 aa).

One can recognise an FAD-binding PCMH-type domain in the interval 1-176 (MFDFASYHRA…VAFHFPPQPK (176 aa)). Residues 27–34 (KLLAGGTD), 109–113 (ATYGG), I165, and F184 each bind FAD.

In terms of assembly, heterotrimer of XdhA, XdhB and XdhC. Requires FAD as cofactor.

It catalyses the reaction xanthine + NAD(+) + H2O = urate + NADH + H(+). The catalysed reaction is hypoxanthine + NAD(+) + H2O = xanthine + NADH + H(+). It functions in the pathway purine metabolism; hypoxanthine degradation; urate from hypoxanthine: step 1/2. Its pathway is purine metabolism; hypoxanthine degradation; urate from hypoxanthine: step 2/2. Functionally, presumed to be a dehydrogenase, but possibly an oxidase. Participates in limited purine salvage (requires aspartate) but does not support aerobic growth on purines as the sole carbon source (purine catabolism). The protein is Putative xanthine dehydrogenase FAD-binding subunit XdhB (xdhB) of Escherichia coli (strain K12).